We begin with the raw amino-acid sequence, 673 residues long: DNA ligase (673 aa).

Position 34–38 (D34–D38) interacts with NAD(+). A disordered region spans residues L54–A73. Residues S83–L84 and E114 each bind NAD(+). Residue K116 is the N6-AMP-lysine intermediate of the active site. NAD(+) is bound by residues R137, E176, K292, and K316. 4 residues coordinate Zn(2+): C410, C413, C428, and C433. The BRCT domain maps to P594 to G673.

The protein belongs to the NAD-dependent DNA ligase family. LigA subfamily. Mg(2+) serves as cofactor. Mn(2+) is required as a cofactor.

It carries out the reaction NAD(+) + (deoxyribonucleotide)n-3'-hydroxyl + 5'-phospho-(deoxyribonucleotide)m = (deoxyribonucleotide)n+m + AMP + beta-nicotinamide D-nucleotide.. In terms of biological role, DNA ligase that catalyzes the formation of phosphodiester linkages between 5'-phosphoryl and 3'-hydroxyl groups in double-stranded DNA using NAD as a coenzyme and as the energy source for the reaction. It is essential for DNA replication and repair of damaged DNA. The chain is DNA ligase from Symbiobacterium thermophilum (strain DSM 24528 / JCM 14929 / IAM 14863 / T).